Consider the following 99-residue polypeptide: Acylphosphatase-1 (99 aa).

A2 is modified (N-acetylalanine). One can recognise an Acylphosphatase-like domain in the interval S9–K99. Catalysis depends on residues R24 and N42.

This sequence belongs to the acylphosphatase family. As to expression, organ-common type isozyme is found in many different tissues.

It catalyses the reaction an acyl phosphate + H2O = a carboxylate + phosphate + H(+). This Gallus gallus (Chicken) protein is Acylphosphatase-1 (ACYP1).